A 216-amino-acid chain; its full sequence is MITVALAKGALLKDSVARFAAAGLDFSAVLDKDNRQLMVPTPCGRARALLVRNGDVPTYVSYGQAQLGVVGYDVLKEHQLPVAQLVDLGFGGCRMSVAVKASSGYQRALDLPAHCRVASKFTHCAREYFDSLDLPVELVHLNGSVELGPITGMSEAIVDLVATGRTLRDNGLVEIEELFRSSARLVGHPLSMRLDDGALTEIVTAIRAVEPSKGEA.

Belongs to the ATP phosphoribosyltransferase family. Short subfamily. As to quaternary structure, heteromultimer composed of HisG and HisZ subunits.

It localises to the cytoplasm. The catalysed reaction is 1-(5-phospho-beta-D-ribosyl)-ATP + diphosphate = 5-phospho-alpha-D-ribose 1-diphosphate + ATP. The protein operates within amino-acid biosynthesis; L-histidine biosynthesis; L-histidine from 5-phospho-alpha-D-ribose 1-diphosphate: step 1/9. Its function is as follows. Catalyzes the condensation of ATP and 5-phosphoribose 1-diphosphate to form N'-(5'-phosphoribosyl)-ATP (PR-ATP). Has a crucial role in the pathway because the rate of histidine biosynthesis seems to be controlled primarily by regulation of HisG enzymatic activity. In Synechococcus sp. (strain CC9902), this protein is ATP phosphoribosyltransferase.